We begin with the raw amino-acid sequence, 260 residues long: Glutamate racemase (260 aa).

Substrate contacts are provided by residues 7–8 and 39–40; these read DS and YG. Cysteine 71 (proton donor/acceptor) is an active-site residue. 72–73 is a substrate binding site; sequence NT. The Proton donor/acceptor role is filled by cysteine 182. 183 to 184 is a substrate binding site; the sequence is TH.

Belongs to the aspartate/glutamate racemases family.

It carries out the reaction L-glutamate = D-glutamate. Its pathway is cell wall biogenesis; peptidoglycan biosynthesis. Provides the (R)-glutamate required for cell wall biosynthesis. The chain is Glutamate racemase from Sulfurihydrogenibium sp. (strain YO3AOP1).